The sequence spans 318 residues: Methionyl-tRNA formyltransferase (318 aa).

Position 110–113 (110–113) interacts with (6S)-5,6,7,8-tetrahydrofolate; it reads SLLP.

Belongs to the Fmt family.

The enzyme catalyses L-methionyl-tRNA(fMet) + (6R)-10-formyltetrahydrofolate = N-formyl-L-methionyl-tRNA(fMet) + (6S)-5,6,7,8-tetrahydrofolate + H(+). In terms of biological role, attaches a formyl group to the free amino group of methionyl-tRNA(fMet). The formyl group appears to play a dual role in the initiator identity of N-formylmethionyl-tRNA by promoting its recognition by IF2 and preventing the misappropriation of this tRNA by the elongation apparatus. This chain is Methionyl-tRNA formyltransferase, found in Geobacillus sp. (strain WCH70).